The chain runs to 311 residues: Dehydrogenase/reductase SDR family member 7C (311 aa).

Positions Met1–Gly18 are cleaved as a signal peptide. Positions 47, 49, 191, 195, and 226 each coordinate NAD(+). Tyr191 functions as the Proton acceptor in the catalytic mechanism.

It belongs to the short-chain dehydrogenases/reductases (SDR) family. As to expression, expressed in skeletal muscle, cardiac muscle and skin.

Its subcellular location is the sarcoplasmic reticulum membrane. It carries out the reaction all-trans-retinol + NAD(+) = all-trans-retinal + NADH + H(+). NADH-dependent oxidoreductase which catalyzes the oxidation of all-trans-retinol to all-trans-retinal. Plays a role in the regulation of cardiac and skeletal muscle metabolic functions. Maintains Ca(2+) intracellular homeostasis by repressing Ca(2+) release from the sarcoplasmic reticulum (SR) in myotubes, possibly through local alternations in NAD/NADH or retinol/retinal. Also plays a role in Ca(2+) homeostasis by controlling Ca(2+) overload in the cytosol and the SR in myotubes. Involved in glucose uptake into skeletal muscles and muscle performance by activating PI3K and mTORC2-mediated AKT1 phosphorylation signaling pathways, possibly through the action of its downstream catalytic product all-trans-retinoic acid. In Rattus norvegicus (Rat), this protein is Dehydrogenase/reductase SDR family member 7C.